The sequence spans 146 residues: Spermidine export protein MdtJ (146 aa).

A run of 4 helical transmembrane segments spans residues 1-21 (MIYW…TLSM), 31-51 (TGMI…AIAV), 54-74 (VALG…ITTF), and 76-96 (VLWF…MLIA).

This sequence belongs to the drug/metabolite transporter (DMT) superfamily. Small multidrug resistance (SMR) (TC 2.A.7.1) family. MdtJ subfamily. As to quaternary structure, forms a complex with MdtI.

It localises to the cell inner membrane. Its function is as follows. Catalyzes the excretion of spermidine. The protein is Spermidine export protein MdtJ of Proteus mirabilis (strain HI4320).